Reading from the N-terminus, the 211-residue chain is Molybdenum cofactor guanylyltransferase (211 aa).

GTP-binding positions include Leu-12 to Gly-14, Lys-25, Asn-55, Asp-73, and Asp-103. Asp-103 is a Mg(2+) binding site.

Belongs to the MobA family. Monomer. It depends on Mg(2+) as a cofactor.

The protein resides in the cytoplasm. It carries out the reaction Mo-molybdopterin + GTP + H(+) = Mo-molybdopterin guanine dinucleotide + diphosphate. Transfers a GMP moiety from GTP to Mo-molybdopterin (Mo-MPT) cofactor (Moco or molybdenum cofactor) to form Mo-molybdopterin guanine dinucleotide (Mo-MGD) cofactor. The protein is Molybdenum cofactor guanylyltransferase of Albidiferax ferrireducens (strain ATCC BAA-621 / DSM 15236 / T118) (Rhodoferax ferrireducens).